Here is a 222-residue protein sequence, read N- to C-terminus: Thymidylate kinase (222 aa).

ATP contacts are provided by residues 29–34 and arginine 111; that span reads RVGKST. Residues 146–170 are LID; the sequence is LSMSSEDATKRGEYGGERYEKLEFQ.

This sequence belongs to the thymidylate kinase family. As to quaternary structure, homodimer. Mg(2+) is required as a cofactor.

It catalyses the reaction dTMP + ATP = dTDP + ADP. It functions in the pathway pyrimidine metabolism; dTTP biosynthesis. Functionally, catalyzes the phosphorylation of thymidine monophosphate (dTMP) to thymidine diphosphate (dTDP), the immediate precursor for the DNA building block dTTP, with ATP as the preferred phosphoryl donor in the presence of Mg(2+). This chain is Thymidylate kinase (dtymk), found in Dictyostelium discoideum (Social amoeba).